The following is a 363-amino-acid chain: Holliday junction branch migration complex subunit RuvB (363 aa).

The disordered stretch occupies residues 1-44 (MAIKRNQGHGLPPKRDPALGRDALTTSQALPEDQEQSANEDRIR). The large ATPase domain (RuvB-L) stretch occupies residues 13–204 (PKRDPALGRD…FGLIQRLRFY (192 aa)). ATP contacts are provided by isoleucine 43, arginine 44, glycine 85, lysine 88, threonine 89, threonine 90, arginine 194, tyrosine 204, and arginine 241. Threonine 89 contributes to the Mg(2+) binding site. A small ATPAse domain (RuvB-S) region spans residues 205 to 275 (EVDELIAIVH…VAATALDLYN (71 aa)). Residues 278-363 (ALGLDWTDRL…EQSTQLDFLP (86 aa)) form a head domain (RuvB-H) region. Residues arginine 333 and arginine 338 each coordinate DNA.

It belongs to the RuvB family. Homohexamer. Forms an RuvA(8)-RuvB(12)-Holliday junction (HJ) complex. HJ DNA is sandwiched between 2 RuvA tetramers; dsDNA enters through RuvA and exits via RuvB. An RuvB hexamer assembles on each DNA strand where it exits the tetramer. Each RuvB hexamer is contacted by two RuvA subunits (via domain III) on 2 adjacent RuvB subunits; this complex drives branch migration. In the full resolvosome a probable DNA-RuvA(4)-RuvB(12)-RuvC(2) complex forms which resolves the HJ.

Its subcellular location is the cytoplasm. It carries out the reaction ATP + H2O = ADP + phosphate + H(+). The RuvA-RuvB-RuvC complex processes Holliday junction (HJ) DNA during genetic recombination and DNA repair, while the RuvA-RuvB complex plays an important role in the rescue of blocked DNA replication forks via replication fork reversal (RFR). RuvA specifically binds to HJ cruciform DNA, conferring on it an open structure. The RuvB hexamer acts as an ATP-dependent pump, pulling dsDNA into and through the RuvAB complex. RuvB forms 2 homohexamers on either side of HJ DNA bound by 1 or 2 RuvA tetramers; 4 subunits per hexamer contact DNA at a time. Coordinated motions by a converter formed by DNA-disengaged RuvB subunits stimulates ATP hydrolysis and nucleotide exchange. Immobilization of the converter enables RuvB to convert the ATP-contained energy into a lever motion, pulling 2 nucleotides of DNA out of the RuvA tetramer per ATP hydrolyzed, thus driving DNA branch migration. The RuvB motors rotate together with the DNA substrate, which together with the progressing nucleotide cycle form the mechanistic basis for DNA recombination by continuous HJ branch migration. Branch migration allows RuvC to scan DNA until it finds its consensus sequence, where it cleaves and resolves cruciform DNA. The sequence is that of Holliday junction branch migration complex subunit RuvB from Picosynechococcus sp. (strain ATCC 27264 / PCC 7002 / PR-6) (Agmenellum quadruplicatum).